Reading from the N-terminus, the 341-residue chain is Pyrophosphate--fructose 6-phosphate 1-phosphotransferase (341 aa).

Gly10 serves as a coordination point for diphosphate. A Mg(2+)-binding site is contributed by Glu103. Substrate contacts are provided by residues 125–127, Arg162, 169–171, Glu221, Arg265, and 271–274; these read TID, MGR, and HTQR. The active-site Proton acceptor is Asp127.

This sequence belongs to the phosphofructokinase type A (PFKA) family. Mixed-substrate PFK group III subfamily. In terms of assembly, homotetramer. The cofactor is Mg(2+).

It is found in the cytoplasm. The enzyme catalyses beta-D-fructose 6-phosphate + diphosphate = beta-D-fructose 1,6-bisphosphate + phosphate + H(+). The protein operates within carbohydrate degradation; glycolysis; D-glyceraldehyde 3-phosphate and glycerone phosphate from D-glucose: step 3/4. Non-allosteric. Functionally, catalyzes the phosphorylation of D-fructose 6-phosphate, the first committing step of glycolysis. Uses inorganic phosphate (PPi) as phosphoryl donor instead of ATP like common ATP-dependent phosphofructokinases (ATP-PFKs), which renders the reaction reversible, and can thus function both in glycolysis and gluconeogenesis. Consistently, PPi-PFK can replace the enzymes of both the forward (ATP-PFK) and reverse (fructose-bisphosphatase (FBPase)) reactions. The chain is Pyrophosphate--fructose 6-phosphate 1-phosphotransferase from Amycolatopsis methanolica.